Consider the following 445-residue polypeptide: MANILQRLPIGEKVGIAFSGGLDTSAALHWMRAKGAVPYAYTANLGQPDESDYEEIPRKAMAYGAEKARLVECRSQLVAEGLAALQCGAFHVSTAGQTYFNTTPLGRAVTGTMLVAAMREDDVNIWGDGSTFKGNDIERFYRYGLLTNPNLRVYKPWLDQQFIDELGGRTEMAEYLIASGFEYKMSVEKAYSTDSNILGATHEAKDLEFLNKGMHIVHPIMGVAFWRDEVKIEKETVTIRFEEGYPVSINGREFGSALELFTEANVIGGRHGLGMSDQIENRIIEAKSRGIYEAPGLALLFIAYERLVTGIHNEDTIEQYRINGKKLGRLLYQGRWLDPQSLMLRESAQRWVAKAVTGEVTVELRRGNDYSIMDTSSANLTYKPERLTMEKGQEYFSPLDRIGQLTMRNLDIIDTRDKLSIYVSAGLLRGSSTTGVPQLPSGSDE.

ATP contacts are provided by residues 17 to 25 (AFSGGLDTS) and alanine 43. Tyrosine 99 provides a ligand contact to L-citrulline. ATP-binding residues include glycine 129 and threonine 131. L-aspartate-binding residues include threonine 131, asparagine 135, and aspartate 136. Asparagine 135 contributes to the L-citrulline binding site. Aspartate 136 is a binding site for ATP. Positions 139 and 192 each coordinate L-citrulline. Position 194 (aspartate 194) interacts with ATP. Residues threonine 201, glutamate 203, and glutamate 280 each contribute to the L-citrulline site.

This sequence belongs to the argininosuccinate synthase family. Type 2 subfamily. In terms of assembly, homotetramer.

It is found in the cytoplasm. The enzyme catalyses L-citrulline + L-aspartate + ATP = 2-(N(omega)-L-arginino)succinate + AMP + diphosphate + H(+). The protein operates within amino-acid biosynthesis; L-arginine biosynthesis; L-arginine from L-ornithine and carbamoyl phosphate: step 2/3. This Gemmatimonas aurantiaca (strain DSM 14586 / JCM 11422 / NBRC 100505 / T-27) protein is Argininosuccinate synthase.